The primary structure comprises 125 residues: MKRHILRAKIHRATVTGANLNYEGSISIDERLLEAGKFVVFEKVDIYNVNNGNRFSTYVIPGKPGEISLNGAAARLCMPGDIIIIASYAEVEEEELHHFRPYLVYVDDKNNILEVKRDMEHVFTF.

Residue Ser25 is the Schiff-base intermediate with substrate; via pyruvic acid of the active site. Ser25 carries the pyruvic acid (Ser) modification. A substrate-binding site is contributed by Thr57. The active-site Proton donor is Tyr58. 71 to 73 (GAA) contributes to the substrate binding site.

Belongs to the PanD family. As to quaternary structure, heterooctamer of four alpha and four beta subunits. Pyruvate serves as cofactor. In terms of processing, is synthesized initially as an inactive proenzyme, which is activated by self-cleavage at a specific serine bond to produce a beta-subunit with a hydroxyl group at its C-terminus and an alpha-subunit with a pyruvoyl group at its N-terminus.

Its subcellular location is the cytoplasm. The enzyme catalyses L-aspartate + H(+) = beta-alanine + CO2. Its pathway is cofactor biosynthesis; (R)-pantothenate biosynthesis; beta-alanine from L-aspartate: step 1/1. Its function is as follows. Catalyzes the pyruvoyl-dependent decarboxylation of aspartate to produce beta-alanine. This Hydrogenobaculum sp. (strain Y04AAS1) protein is Aspartate 1-decarboxylase.